Reading from the N-terminus, the 493-residue chain is Probable fatty acyl-CoA reductase 4 (493 aa).

It belongs to the fatty acyl-CoA reductase family. In terms of tissue distribution, expressed in the endodermal cell layer surrounding the central vasculature in roots. Expressed in the hilum region of seeds. Expressed in stamen filaments and receptacle of siliques.

It catalyses the reaction a long-chain fatty acyl-CoA + 2 NADPH + 2 H(+) = a long-chain primary fatty alcohol + 2 NADP(+) + CoA. Its function is as follows. Catalyzes the reduction of fatty acyl-CoA to fatty alcohols. Catalyzes specifically the formation of C18:0 and C20:0 fatty alcohols. Provides the fatty alcohols required for synthesis of suberin in roots, seed coat and wound-induced leaf tissue. Provides the fatty alcohols required for synthesis of alkyl hydroxycinnamates in root waxes. The polypeptide is Probable fatty acyl-CoA reductase 4 (Arabidopsis thaliana (Mouse-ear cress)).